Here is a 410-residue protein sequence, read N- to C-terminus: Dephospho-CoA kinase (410 aa).

The DPCK domain maps to 3 to 201 (CIGITGGIGA…HRILPFAYNL (199 aa)). 11–16 (GAGKSL) provides a ligand contact to ATP. The segment at 196–410 (PFAYNLSQRQ…EWADSTGWRL (215 aa)) is UPF0157.

The protein in the N-terminal section; belongs to the CoaE family. It in the C-terminal section; belongs to the UPF0157 (GrpB) family.

It is found in the cytoplasm. The enzyme catalyses 3'-dephospho-CoA + ATP = ADP + CoA + H(+). It participates in cofactor biosynthesis; coenzyme A biosynthesis; CoA from (R)-pantothenate: step 5/5. In terms of biological role, catalyzes the phosphorylation of the 3'-hydroxyl group of dephosphocoenzyme A to form coenzyme A. This Mycobacterium leprae (strain TN) protein is Dephospho-CoA kinase.